Reading from the N-terminus, the 208-residue chain is V-type ATP synthase subunit D (208 aa).

Belongs to the V-ATPase D subunit family.

Functionally, produces ATP from ADP in the presence of a proton gradient across the membrane. This chain is V-type ATP synthase subunit D, found in Chlamydia felis (strain Fe/C-56) (Chlamydophila felis).